The chain runs to 152 residues: VQ motif-containing protein 8, chloroplastic (152 aa).

Positions 1-42 (MIPTRCNEINGSRPSSLKLAGESHTIKKTSSCKSKPRPHGRA) are disordered. Residues 1 to 58 (MIPTRCNEINGSRPSSLKLAGESHTIKKTSSCKSKPRPHGRASPVIIYAHSPKVIHTR) constitute a chloroplast transit peptide. Residues 62-71 (FMALVQRLTG) carry the VQ motif. A disordered region spans residues 80–108 (TSESSSSVVTEEVNVGDDNTAAPFSQDRT). A compositionally biased stretch (low complexity) spans 81-92 (SESSSSVVTEEV).

It localises to the plastid. Its subcellular location is the chloroplast. Functionally, may be involved in chloroplast development. This Arabidopsis thaliana (Mouse-ear cress) protein is VQ motif-containing protein 8, chloroplastic.